Consider the following 358-residue polypeptide: Dynein axonemal assembly factor 10 (358 aa).

WD repeat units follow at residues Glu-64–Tyr-106, Asn-116–Ala-155, Glu-163–Glu-206, Asn-208–Gly-250, Ala-258–Arg-298, and Leu-320–Leu-358.

As to quaternary structure, interacts with PIH1D1; the interaction associates DNAAF10 with the R2TP complex. Interacts with several dynein axonemal assembly factors.

It is found in the dynein axonemal particle. Functionally, key assembly factor specifically required for the stability of axonemal dynein heavy chains in cytoplasm. This Xenopus tropicalis (Western clawed frog) protein is Dynein axonemal assembly factor 10 (dnaaf10).